The chain runs to 400 residues: Elongation factor Tu (400 aa).

Residues 10–210 (KPHCNVGTIG…VDSYIPIPPR (201 aa)) form the tr-type G domain. Positions 19 to 26 (GHVDHGKT) are G1. 19-26 (GHVDHGKT) is a GTP binding site. T26 contacts Mg(2+). A G2 region spans residues 60-64 (GLTIA). Positions 81-84 (DCPG) are G3. GTP-binding positions include 81–85 (DCPGH) and 136–139 (NKCD). Positions 136–139 (NKCD) are G4. The tract at residues 174–176 (SAI) is G5.

This sequence belongs to the TRAFAC class translation factor GTPase superfamily. Classic translation factor GTPase family. EF-Tu/EF-1A subfamily. Monomer.

It is found in the cytoplasm. The enzyme catalyses GTP + H2O = GDP + phosphate + H(+). GTP hydrolase that promotes the GTP-dependent binding of aminoacyl-tRNA to the A-site of ribosomes during protein biosynthesis. This is Elongation factor Tu from Dehalococcoides mccartyi (strain ATCC BAA-2266 / KCTC 15142 / 195) (Dehalococcoides ethenogenes (strain 195)).